A 634-amino-acid chain; its full sequence is Beta-ketoacyl-[acyl-carrier-protein] synthase FabY (634 aa).

Residues 78 to 546 (ERIFASTLVR…GNNASGVVLS (469 aa)) form the Ketosynthase family 3 (KS3) domain. Residues cysteine 281, histidine 434, and histidine 472 each act as for beta-ketoacyl synthase activity in the active site.

It belongs to the thiolase-like superfamily. Beta-ketoacyl-ACP synthases family. In terms of assembly, homodimer.

The catalysed reaction is malonyl-[ACP] + acetyl-CoA + H(+) = 3-oxobutanoyl-[ACP] + CO2 + CoA. It functions in the pathway lipid metabolism; fatty acid biosynthesis. Its function is as follows. Involved in the initiation of the fatty acid biosynthesis. Catalyzes the condensation of acetyl coenzyme A (acetyl-CoA) with malonyl-acyl carrier protein (ACP) to make the fatty acid synthesis (FAS) primer beta-acetoacetyl-ACP. It can also use short-chain acyl-CoA as substrates, including butyryl-CoA, and hexanoyl-CoA, but does not use any of the longer chain acyl-CoA substrates. This is Beta-ketoacyl-[acyl-carrier-protein] synthase FabY (fabY) from Pseudomonas aeruginosa (strain ATCC 15692 / DSM 22644 / CIP 104116 / JCM 14847 / LMG 12228 / 1C / PRS 101 / PAO1).